The following is a 923-amino-acid chain: DNA mismatch repair protein PMS1 (923 aa).

3 stretches are compositionally biased toward basic and acidic residues: residues 543-553 (DMTPSERDSEL), 565-581 (NVERHEREHEKPIRFEE), and 591-601 (GDVERVSEDNP). Positions 543 to 603 (DMTPSERDSE…ERVSEDNPRC (61 aa)) are disordered.

This sequence belongs to the DNA mismatch repair MutL/HexB family. In terms of assembly, heterodimer of MLH1 and PMS1, called MutLalpha, which is the major MMR MutL activity correcting base-base mismatches as well as IDLs. The heterodimer binds double strand DNA independently of a mismatch with positive cooperativity and has more than one DNA binding site. Forms a ternary complex with either the MSH2-MSH6 (MutSalpha) or the MSH2-MSH3 heterodimer (MutSbeta), which recognize and bind to mismatch DNA. Ternary complex formation is promoted by ATP binding. Expressed at very low levels in mature leaves. Detected in rapidly dividing tissues.

The protein resides in the nucleus. Functionally, required for DNA mismatch repair (MMR), correcting base-base mismatches and insertion-deletion loops (IDLs) resulting from DNA replication, DNA damage or from recombination events between non-identical sequences during meiosis. Component of the MutLalpha heterodimer that forms a ternary complex with the MutS heterodimers, which initially recognize the DNA mismatches. This complex is thought to be responsible for directing the downstream MMR events, including strand discrimination, excision, and resynthesis. Plays a major role in maintaining the genetic stability of simple sequence repeats and in the repair of heteroduplex sites present in meiotic recombination intermediates. Does not seem to be required for homologous somatic recombination. This is DNA mismatch repair protein PMS1 (PMS1) from Arabidopsis thaliana (Mouse-ear cress).